Reading from the N-terminus, the 1405-residue chain is Rho guanine nucleotide exchange factor 18 (1405 aa).

Disordered regions lie at residues methionine 1 to phenylalanine 47, glutamate 92 to glutamine 115, and proline 289 to arginine 330. Basic and acidic residues-rich tracts occupy residues glutamate 92 to serine 103 and arginine 308 to arginine 330. The segment at serine 347 to serine 372 adopts a C2H2-type; degenerate zinc-finger fold. The region spanning lysine 485 to lysine 682 is the DH domain. The region spanning glutamine 723–glutamate 825 is the PH domain. The disordered stretch occupies residues glutamine 936–glutamate 1016. The residue at position 952 (threonine 952) is a Phosphothreonine. At serine 961 the chain carries Phosphoserine. The stretch at phenylalanine 1084–phenylalanine 1181 forms a coiled coil. Disordered stretches follow at residues glutamate 1198–proline 1242, arginine 1274–serine 1309, and glutamate 1328–phenylalanine 1405. Phosphoserine is present on residues serine 1336 and serine 1338. Pro residues predominate over residues phenylalanine 1355–threonine 1365. The segment covering threonine 1375 to threonine 1394 has biased composition (low complexity). Positions glutamate 1396 to phenylalanine 1405 are enriched in basic and acidic residues.

As to quaternary structure, interacts with SEPT9; interaction may inhibit GEF activity. Interacts with Gbetagamma subunits GNB1 and GNG2. Interacts with EPB41L4B. Interacts with PATJ (via C-terminus).

The protein localises to the cytoplasm. It localises to the cytoskeleton. The protein resides in the cell membrane. Its subcellular location is the apical cell membrane. Its function is as follows. Acts as a guanine nucleotide exchange factor (GEF) for RhoA GTPases. May play a role in actin cytoskeleton reorganization in different tissues since its activation induces formation of actin stress fibers. Also acts as a GEF for RAC1, inducing production of reactive oxygen species (ROS). Does not act as a GEF for CDC42. The G protein beta-gamma (Gbetagamma) subunits of heterotrimeric G proteins act as activators, explaining the integrated effects of LPA and other G-protein coupled receptor agonists on actin stress fiber formation, cell shape change and ROS production. Required for EPB41L4B-mediated regulation of the circumferential actomyosin belt in epithelial cells. The polypeptide is Rho guanine nucleotide exchange factor 18 (Arhgef18) (Mus musculus (Mouse)).